The sequence spans 109 residues: Small ribosomal subunit protein bS6 (109 aa).

This sequence belongs to the bacterial ribosomal protein bS6 family.

In terms of biological role, binds together with bS18 to 16S ribosomal RNA. The protein is Small ribosomal subunit protein bS6 of Dehalococcoides mccartyi (strain ATCC BAA-2266 / KCTC 15142 / 195) (Dehalococcoides ethenogenes (strain 195)).